Consider the following 134-residue polypeptide: MPARPASSTTRQGALAEDRALAYLQRQGLVAVERNYRCKGGEIDLIMRAADDTLVFVEVRKRGGRGFGGAAASITLTKQRRVLRAASHYLATLDRLPPCRVDVVALDPGRLEWLRNAFDLGALDSEGGGEGPAS.

The protein belongs to the UPF0102 family.

This Cupriavidus metallidurans (strain ATCC 43123 / DSM 2839 / NBRC 102507 / CH34) (Ralstonia metallidurans) protein is UPF0102 protein Rmet_3430.